The chain runs to 46 residues: Spectrin alpha chain, non-erythrocytic 1 (46 aa).

Spectrin repeat units follow at residues 1 to 5, 7 to 14, 15 to 20, 21 to 26, 27 to 35, and 39 to 46; these read AQLAD, FHLQQFFR, SQLLGS, AHEVQR, LAQFVEHWK, and DLFLTFAK.

It belongs to the spectrin family. In terms of assembly, associates with the gamma-tubulin complex in brain, but not in kidney, liver, sperm, or uterus. Like erythrocyte spectrin, the spectrin-like proteins are capable of forming dimers which can further associate to tetramers. Interacts with isoform 1 of ACP1. Interacts with CALM and EMD. Interacts (via C-terminal spectrin repeats) with TRPC4. Identified in a complex with ACTN4, CASK, IQGAP1, MAGI2, NPHS1 and SPTBN1. Interacts with CLN3; this interaction regulates the fodrin localization at the plasma membrane.

The protein localises to the cytoplasm. The protein resides in the cytoskeleton. Its subcellular location is the cell cortex. Functionally, fodrin, which seems to be involved in secretion, interacts with calmodulin in a calcium-dependent manner and is thus candidate for the calcium-dependent movement of the cytoskeleton at the membrane. This chain is Spectrin alpha chain, non-erythrocytic 1 (SPTAN1), found in Capra hircus (Goat).